Reading from the N-terminus, the 33-residue chain is Natriuretic peptide NP2 (33 aa).

Cysteine 10 and cysteine 26 form a disulfide bridge.

As to expression, expressed by the venom gland.

The protein resides in the secreted. Its function is as follows. Snake venom natriuretic peptide that shows an increase in perfusion pressure, urinary flow and glomerular filtration rate. Reduces total and proximal tubular transport of sodium. In the aortic ring assay, causes a relaxant effect in endothelium-intact thoracic aortic rings precontracted with phenylephrine in the presence and absence of isatin, a natriuretic receptor antagonist. This chain is Natriuretic peptide NP2, found in Crotalus durissus cascavella (Northeastern Brazilian rattlesnake).